A 285-amino-acid polypeptide reads, in one-letter code: Urease accessory protein UreD (285 aa).

The protein belongs to the UreD family. In terms of assembly, ureD, UreF and UreG form a complex that acts as a GTP-hydrolysis-dependent molecular chaperone, activating the urease apoprotein by helping to assemble the nickel containing metallocenter of UreC. The UreE protein probably delivers the nickel.

The protein localises to the cytoplasm. In terms of biological role, required for maturation of urease via the functional incorporation of the urease nickel metallocenter. This is Urease accessory protein UreD from Citrobacter koseri (strain ATCC BAA-895 / CDC 4225-83 / SGSC4696).